A 491-amino-acid polypeptide reads, in one-letter code: Glutamyl-tRNA(Gln) amidotransferase subunit A (491 aa).

Residues Lys79 and Ser158 each act as charge relay system in the active site. Residue Ser182 is the Acyl-ester intermediate of the active site.

The protein belongs to the amidase family. GatA subfamily. Heterotrimer of A, B and C subunits.

It catalyses the reaction L-glutamyl-tRNA(Gln) + L-glutamine + ATP + H2O = L-glutaminyl-tRNA(Gln) + L-glutamate + ADP + phosphate + H(+). In terms of biological role, allows the formation of correctly charged Gln-tRNA(Gln) through the transamidation of misacylated Glu-tRNA(Gln) in organisms which lack glutaminyl-tRNA synthetase. The reaction takes place in the presence of glutamine and ATP through an activated gamma-phospho-Glu-tRNA(Gln). In Maricaulis maris (strain MCS10) (Caulobacter maris), this protein is Glutamyl-tRNA(Gln) amidotransferase subunit A.